The chain runs to 81 residues: Sec-independent protein translocase protein TatA (81 aa).

A helical transmembrane segment spans residues 1–21 (MGMPSGQELLIILAIVVLLFG). The interval 45 to 81 (NEDDDTEVKSASTEAPKKVESAEEVASKESSKTPTQA) is disordered. A compositionally biased stretch (basic and acidic residues) spans 59–75 (APKKVESAEEVASKESS).

This sequence belongs to the TatA/E family. The Tat system comprises two distinct complexes: a TatABC complex, containing multiple copies of TatA, TatB and TatC subunits, and a separate TatA complex, containing only TatA subunits. Substrates initially bind to the TatABC complex, which probably triggers association of the separate TatA complex to form the active translocon.

Its subcellular location is the cell inner membrane. Functionally, part of the twin-arginine translocation (Tat) system that transports large folded proteins containing a characteristic twin-arginine motif in their signal peptide across membranes. TatA could form the protein-conducting channel of the Tat system. The sequence is that of Sec-independent protein translocase protein TatA from Sulfurimonas denitrificans (strain ATCC 33889 / DSM 1251) (Thiomicrospira denitrificans (strain ATCC 33889 / DSM 1251)).